We begin with the raw amino-acid sequence, 255 residues long: MVMSSYMVNSKYVDPKFPPCEEYLQGGYLGEQGADYYGGGAQGADFQPPGLYPRPDFGEQPFGGSGPGPGSALPARGHGQEPGGPGGHYAAPGEPCPAPPAPPPAPLPGARAYSQSDPKQPPSGTALKQPAVVYPWMKKVHVNSVNPNYTGGEPKRSRTAYTRQQVLELEKEFHFNRYLTRRRRIEIAHTLCLSERQIKIWFQNRRMKWKKDHKLPNTKGRSSSSSSSSSCSSSVAPSQHLQPMAKDHHTDLTTL.

Positions 31-127 (EQGADYYGGG…PKQPPSGTAL (97 aa)) are disordered. A compositionally biased stretch (pro residues) spans 94–107 (EPCPAPPAPPPAPL). The Antp-type hexapeptide motif lies at 133–138 (VYPWMK). A DNA-binding region (homeobox) is located at residues 154-213 (PKRSRTAYTRQQVLELEKEFHFNRYLTRRRRIEIAHTLCLSERQIKIWFQNRRMKWKKDH). Residues 212-255 (DHKLPNTKGRSSSSSSSSSCSSSVAPSQHLQPMAKDHHTDLTTL) are disordered. Residues 222 to 234 (SSSSSSSSSCSSS) are compositionally biased toward low complexity. A compositionally biased stretch (basic and acidic residues) spans 245-255 (AKDHHTDLTTL).

It belongs to the Antp homeobox family. Deformed subfamily. As to quaternary structure, forms a DNA-binding heterodimer with transcription factor PBX1.

The protein localises to the nucleus. In terms of biological role, sequence-specific transcription factor which is part of a developmental regulatory system that provides cells with specific positional identities on the anterior-posterior axis. This is Homeobox protein Hox-D4 (HOXD4) from Homo sapiens (Human).